The following is a 120-amino-acid chain: NAD(P)H-quinone oxidoreductase subunit 3, chloroplastic (120 aa).

Transmembrane regions (helical) follow at residues 10-30 (LWFF…ISEI), 64-84 (MFAL…PWAI), and 89-109 (LGIS…VGLV).

Belongs to the complex I subunit 3 family. In terms of assembly, NDH is composed of at least 16 different subunits, 5 of which are encoded in the nucleus.

It localises to the plastid. Its subcellular location is the chloroplast thylakoid membrane. It catalyses the reaction a plastoquinone + NADH + (n+1) H(+)(in) = a plastoquinol + NAD(+) + n H(+)(out). The catalysed reaction is a plastoquinone + NADPH + (n+1) H(+)(in) = a plastoquinol + NADP(+) + n H(+)(out). Its function is as follows. NDH shuttles electrons from NAD(P)H:plastoquinone, via FMN and iron-sulfur (Fe-S) centers, to quinones in the photosynthetic chain and possibly in a chloroplast respiratory chain. The immediate electron acceptor for the enzyme in this species is believed to be plastoquinone. Couples the redox reaction to proton translocation, and thus conserves the redox energy in a proton gradient. This is NAD(P)H-quinone oxidoreductase subunit 3, chloroplastic from Chara vulgaris (Common stonewort).